The primary structure comprises 279 residues: Phospholipase A and acyltransferase 5 (279 aa).

2 disordered regions span residues 1–53 and 70–117; these read MGLS…GLNS and QLPA…ENEG. Positions 97–106 are enriched in polar residues; that stretch reads LETTPSQKAD. Residues 135 to 249 form the LRAT domain; sequence LIEIFRIGYE…LRYGVPRSQQ (115 aa). Active-site residues include His-145 and His-157. Cys-233 (acyl-thioester intermediate) is an active-site residue.

It belongs to the H-rev107 family. In terms of tissue distribution, highest expression level in testis and pancreas.

It localises to the cytoplasm. Its subcellular location is the cytosol. The enzyme catalyses a 1,2-diacyl-sn-glycero-3-phosphocholine + H2O = a 1-acyl-sn-glycero-3-phosphocholine + a fatty acid + H(+). It catalyses the reaction a 1,2-diacyl-sn-glycero-3-phosphocholine + H2O = a 2-acyl-sn-glycero-3-phosphocholine + a fatty acid + H(+). The catalysed reaction is 1-hexadecanoyl-2-(5Z,8Z,11Z,14Z-eicosatetraenoyl)-sn-glycero-3-phosphocholine + 1,2-di-(9Z-octadecenoyl)-sn-glycero-3-phosphoethanolamine = N-(5Z,8Z,11Z,14Z-eicosatetraenoyl)-1,2-di-(9Z-octadecenoyl)-sn-glycero-3-phosphoethanolamine + 1-hexadecanoyl-sn-glycero-3-phosphocholine + H(+). It carries out the reaction 1,2-di-(9Z-octadecenoyl)-sn-glycero-3-phosphoethanolamine + 1,2-dihexadecanoyl-sn-glycero-3-phosphocholine = N-hexadecanoyl-1,2-di-(9Z-octadecenoyl)-sn-glycero-3-phosphoethanolamine + 1-hexadecanoyl-sn-glycero-3-phosphocholine + H(+). The enzyme catalyses 1,2-di-(9Z-octadecenoyl)-sn-glycero-3-phosphoethanolamine + 1,2-dihexadecanoyl-sn-glycero-3-phosphocholine = N-hexadecanoyl-1,2-di-(9Z-octadecenoyl)-sn-glycero-3-phosphoethanolamine + 2-hexadecanoyl-sn-glycero-3-phosphocholine + H(+). It catalyses the reaction a 1,2-diacyl-sn-glycero-3-phosphoethanolamine + a 1,2-diacyl-sn-glycero-3-phosphocholine = an N-acyl-1,2-diacyl-sn-glycero-3-phosphoethanolamine + a 1-acyl-sn-glycero-3-phosphocholine + H(+). The catalysed reaction is a 1,2-diacyl-sn-glycero-3-phosphoethanolamine + a 1,2-diacyl-sn-glycero-3-phosphocholine = an N-acyl-1,2-diacyl-sn-glycero-3-phosphoethanolamine + a 2-acyl-sn-glycero-3-phosphocholine + H(+). It carries out the reaction 1-hexadecanoyl-2-(9Z-octadecenoyl)-sn-glycero-3-phosphocholine + 1,2-di-(9Z-octadecenoyl)-sn-glycero-3-phosphoethanolamine = N,1,2-tri-(9Z-octadecenoyl)-sn-glycero-3-phosphoethanolamine + 1-hexadecanoyl-sn-glycero-3-phosphocholine + H(+). Exhibits both phospholipase A1/2 and acyltransferase activities. Shows phospholipase A1 (PLA1) and A2 (PLA2) activity, catalyzing the calcium-independent release of fatty acids from the sn-1 or sn-2 position of glycerophospholipids. Shows N-acyltransferase activity, catalyzing the calcium-independent transfer of a fatty acyl group at the sn-1 position of phosphatidylcholine (PC) and other glycerophospholipids to the primary amine of phosphatidylethanolamine (PE), forming N-acylphosphatidylethanolamine (NAPE), which serves as precursor for N-acylethanolamines (NAEs). This Homo sapiens (Human) protein is Phospholipase A and acyltransferase 5.